The primary structure comprises 306 residues: Dihydroorotate dehydrogenase B (NAD(+)), catalytic subunit (306 aa).

FMN-binding positions include Ser23 and 47–48 (KS). Residues Lys47, 71-75 (NAMGL), and Asn130 contribute to the substrate site. Asn130 lines the FMN pocket. Residue Cys133 is the Nucleophile of the active site. FMN contacts are provided by Lys168 and Ile194. Residue 195-196 (NT) coordinates substrate. Residues Gly220, 246–247 (GG), and 268–269 (GS) contribute to the FMN site.

The protein belongs to the dihydroorotate dehydrogenase family. Type 1 subfamily. As to quaternary structure, heterotetramer of 2 PyrK and 2 PyrD type B subunits. Requires FMN as cofactor.

It localises to the cytoplasm. It carries out the reaction (S)-dihydroorotate + NAD(+) = orotate + NADH + H(+). It participates in pyrimidine metabolism; UMP biosynthesis via de novo pathway; orotate from (S)-dihydroorotate (NAD(+) route): step 1/1. Its function is as follows. Catalyzes the conversion of dihydroorotate to orotate with NAD(+) as electron acceptor. The protein is Dihydroorotate dehydrogenase B (NAD(+)), catalytic subunit (pyrD) of Methanocaldococcus jannaschii (strain ATCC 43067 / DSM 2661 / JAL-1 / JCM 10045 / NBRC 100440) (Methanococcus jannaschii).